Consider the following 374-residue polypeptide: Alginate lyase (374 aa).

Positions 1 to 23 are cleaved as a signal peptide; it reads MHKTRLALSCLLGSLLLSGAVHA. Substrate contacts are provided by residues 62 to 63, 135 to 136, and Y253; these read SK and HT.

It belongs to the polysaccharide lyase 5 family.

It is found in the periplasm. The enzyme catalyses Eliminative cleavage of alginate to give oligosaccharides with 4-deoxy-alpha-L-erythro-hex-4-enuronosyl groups at their non-reducing ends and beta-D-mannuronate at their reducing end.. In terms of biological role, catalyzes the depolymerization of alginate by cleaving the beta-1,4 glycosidic bond between two adjacent sugar residues via a beta-elimination mechanism. May serve to degrade mislocalized alginate that is trapped in the periplasmic space. The sequence is that of Alginate lyase from Azotobacter vinelandii (strain DJ / ATCC BAA-1303).